We begin with the raw amino-acid sequence, 291 residues long: MRRYPAVAGQFYPEGDALIEMLSSFFKDLGEEGTKRTITAGVAPHAGYVFSGFTASRTYKAIYEDGLPEVFVIFGPNHTGLGSPIALYPEGEWITPMGSIKVDSKFAKEIVKRSGIADLDDLAHKYEHSIEVQLPFIQYIAEKAGVEVKIVPITLGIQDEEVSRSLGRSIFEASTSLGRDTIIIASTDFMHYGSFYGYVPFRGRPEELPNMVRDWDMRIIRRILDFDLDGMFSEIREMNHTMCGPGGVGAGIIYSRLMKAKEAELLHYTTSFEVSRSPDAIVGYASIIMKR.

It belongs to the MEMO1 family.

The chain is MEMO1 family protein PH1626 from Pyrococcus horikoshii (strain ATCC 700860 / DSM 12428 / JCM 9974 / NBRC 100139 / OT-3).